The primary structure comprises 223 residues: Cytotoxic T-lymphocyte protein 4 (223 aa).

A signal peptide spans 1–35; it reads MACLGLRRYKAQLQLPSRTWPFVALLTLLFIPVFS. The Ig-like V-type domain maps to 36-145; it reads EAIQVTQPSV…PPPYFVGMGN (110 aa). The Extracellular portion of the chain corresponds to 36–161; the sequence is EAIQVTQPSV…IDPEPCPDSD (126 aa). Positions 46–50 are homodimerization; it reads VLASS. 2 disulfides stabilise this stretch: Cys58–Cys129 and Cys85–Cys103. N-linked (GlcNAc...) asparagine glycans are attached at residues Asn108 and Asn113. Positions 134–139 are important for interaction with CD80 and CD86; it reads MYPPPY. N-linked (GlcNAc...) asparagine glycosylation is present at Asn145. Residues 150-155 are homodimerization; it reads YVIDPE. Residues 162 to 182 form a helical membrane-spanning segment; the sequence is FLLWILVAVSLGLFFYSFLVS. Over 183-223 the chain is Cytoplasmic; that stretch reads AVSLSKMLKKRSPLTTGVYVKMPPTEPECEKQFQPYFIPIN. At Tyr201 the chain carries Phosphotyrosine; by TXK and JAK2.

As to quaternary structure, homodimer; disulfide-linked. Binds to CD80/B7-1 and CD86/B7.2. Interacts with ICOSLG. In terms of processing, N-glycosylation is important for dimerization. Post-translationally, phosphorylation at Tyr-201 prevents binding to the AP-2 adapter complex, blocks endocytosis, and leads to retention of CTLA4 on the cell surface. In terms of tissue distribution, widely expressed with highest levels in lymphoid tissues.

It localises to the cell membrane. Its function is as follows. Inhibitory receptor acting as a major negative regulator of T-cell responses. The affinity of CTLA4 for its natural B7 family ligands, CD80 and CD86, is considerably stronger than the affinity of their cognate stimulatory coreceptor CD28. The sequence is that of Cytotoxic T-lymphocyte protein 4 (Ctla4) from Mus musculus (Mouse).